The following is a 371-amino-acid chain: Transmembrane protein 229A (371 aa).

Residues 1–30 (MAGSDVASEGPSPRDGATRRPGATGGLRSQ) form a disordered region. 6 helical membrane-spanning segments follow: residues 51–71 (LPAW…DVLV), 117–137 (AFLF…TLAG), 235–255 (FLFF…FFNV), 269–289 (LWSF…YFHL), 301–321 (VPIY…GLRM), and 334–354 (LNFM…LSVY).

The protein belongs to the TMEM229 family.

The protein localises to the membrane. The sequence is that of Transmembrane protein 229A (Tmem229a) from Mus musculus (Mouse).